A 245-amino-acid polypeptide reads, in one-letter code: DNA repair protein RecO (245 aa).

Belongs to the RecO family.

Its function is as follows. Involved in DNA repair and RecF pathway recombination. The polypeptide is DNA repair protein RecO (Porphyromonas gingivalis (strain ATCC 33277 / DSM 20709 / CIP 103683 / JCM 12257 / NCTC 11834 / 2561)).